The following is a 25-amino-acid chain: Omega conotoxin-CVIF (25 aa).

3 disulfides stabilise this stretch: C1–C16, C8–C20, and C15–C25. Cysteine amide is present on C25.

It belongs to the conotoxin O1 superfamily. Expressed by the venom duct.

It localises to the secreted. Its function is as follows. Omega-conotoxins act at presynaptic membranes, they bind and block voltage-gated calcium channels. This toxin blocks N-type calcium channels (Cav2.2/CACNA1B). It shows a higher potency when Cav2.2/CACNA1B is only expressed with the ancillary subunit CACNB3 (IC(50)=0.1 nM) than on Cav2.2/CACNA1B expressed with the ancillary subunits CACNA2D1 and CACNB3 (IC(50)=19.9 nM). The Cav2.2/CACNA1B block by this toxin is voltage-independent, whereas the recovery from toxin block is voltage-dependent. There is a low recovery at physiological membrane potential and a high recovery with hyperpolarized potential. This indicates that the toxin has a higher affinity for Cav2.2/CACNA1B in the inactivated state. It is noteworthy that ancillary subunits beta modulate recovery from this toxin block. Cav2.2/CACNA1B expressed with the ancillary subunit CACNB2a (isoform 2a) almost recover completely from this toxin block, whereas an expression with CACNB3 exhibits relatively weak recovery. Inhibition by this toxin of excitatory synaptic transmission is reversible. In vivo, when tested on rat model of persistent pain, this toxin blocks chronic pain behavior. The sequence is that of Omega conotoxin-CVIF from Conus catus (Cat cone).